The following is a 219-amino-acid chain: Phosphatidylserine decarboxylase proenzyme (219 aa).

The Schiff-base intermediate with substrate; via pyruvic acid role is filled by S188. Position 188 is a pyruvic acid (Ser); by autocatalysis (S188).

The protein belongs to the phosphatidylserine decarboxylase family. PSD-A subfamily. Heterodimer of a large membrane-associated beta subunit and a small pyruvoyl-containing alpha subunit. Requires pyruvate as cofactor. Post-translationally, is synthesized initially as an inactive proenzyme. Formation of the active enzyme involves a self-maturation process in which the active site pyruvoyl group is generated from an internal serine residue via an autocatalytic post-translational modification. Two non-identical subunits are generated from the proenzyme in this reaction, and the pyruvate is formed at the N-terminus of the alpha chain, which is derived from the carboxyl end of the proenzyme. The post-translation cleavage follows an unusual pathway, termed non-hydrolytic serinolysis, in which the side chain hydroxyl group of the serine supplies its oxygen atom to form the C-terminus of the beta chain, while the remainder of the serine residue undergoes an oxidative deamination to produce ammonia and the pyruvoyl prosthetic group on the alpha chain.

Its subcellular location is the cell membrane. It catalyses the reaction a 1,2-diacyl-sn-glycero-3-phospho-L-serine + H(+) = a 1,2-diacyl-sn-glycero-3-phosphoethanolamine + CO2. It functions in the pathway phospholipid metabolism; phosphatidylethanolamine biosynthesis; phosphatidylethanolamine from CDP-diacylglycerol: step 2/2. In terms of biological role, catalyzes the formation of phosphatidylethanolamine (PtdEtn) from phosphatidylserine (PtdSer). The protein is Phosphatidylserine decarboxylase proenzyme of Trichlorobacter lovleyi (strain ATCC BAA-1151 / DSM 17278 / SZ) (Geobacter lovleyi).